The chain runs to 85 residues: Large ribosomal subunit protein bL27 (85 aa).

The segment at 1–25 (MAHKKAGSSSKNGRDSNPQYLGVKR) is disordered. Positions 7-19 (GSSSKNGRDSNPQ) are enriched in polar residues.

The protein belongs to the bacterial ribosomal protein bL27 family.

The sequence is that of Large ribosomal subunit protein bL27 from Micrococcus luteus (strain ATCC 4698 / DSM 20030 / JCM 1464 / CCM 169 / CCUG 5858 / IAM 1056 / NBRC 3333 / NCIMB 9278 / NCTC 2665 / VKM Ac-2230) (Micrococcus lysodeikticus).